The chain runs to 459 residues: O-phospho-L-seryl-tRNA:Cys-tRNA synthase 1 (459 aa).

Residues 152-153 (AR), Asn257, and 280-282 (SGH) contribute to the pyridoxal 5'-phosphate site. The residue at position 283 (Lys283) is an N6-(pyridoxal phosphate)lysine.

This sequence belongs to the SepCysS family. As to quaternary structure, homodimer. Interacts with SepRS. Requires pyridoxal 5'-phosphate as cofactor.

The enzyme catalyses O-phospho-L-seryl-tRNA(Cys) + hydrogen sulfide + H(+) = L-cysteinyl-tRNA(Cys) + phosphate. In terms of biological role, converts O-phospho-L-seryl-tRNA(Cys) (Sep-tRNA(Cys)) to L-cysteinyl-tRNA(Cys) (Cys-tRNA(Cys)). The polypeptide is O-phospho-L-seryl-tRNA:Cys-tRNA synthase 1 (Methanococcoides burtonii (strain DSM 6242 / NBRC 107633 / OCM 468 / ACE-M)).